We begin with the raw amino-acid sequence, 431 residues long: O-methyltransferase gliM (431 aa).

Residues 20 to 85 (EFKAIVNDLR…SMDKLQLQLV (66 aa)) are a coiled coil. Residues Asp-287 and 319–321 (GDF) each bind S-adenosyl-L-methionine. The active-site Proton acceptor is His-338.

Belongs to the class I-like SAM-binding methyltransferase superfamily. Cation-independent O-methyltransferase family. COMT subfamily.

It functions in the pathway mycotoxin biosynthesis. Its function is as follows. O-methyltransferase; part of the gene cluster that mediates the biosynthesis of gliotoxin, a member of the epipolythiodioxopiperazine (ETP) class of toxins characterized by a disulfide bridged cyclic dipeptide. The first step in gliotoxin biosynthesis is the condensation of serine and phenylalanine to form the cyclo-L-phenylalanyl-L-serine diketopiperazine (DKP) by the NRPS gliP. GliP is also able to produce the DKP cyclo-L-tryptophanyl-L-serine, suggesting that the substrate specificity of the first adenylation (A) domain in gliP is sufficiently relaxed to accommodate both L-Phe and L-Trp. The cytochrome P450 monooxygenase gliC has been shown to catalyze the subsequent hydroxylation of the alpha-carbon of L-Phe in cyclo-L-phenylalanyl-L-serine whereas the second cytochrome P450 enzyme, gliF, is presumably involved in the modification of the DKP side chain. The glutathione S-transferase (GST) gliG then forms a bis-glutathionylated biosynthetic intermediate which is responsible for the sulfurization of gliotoxin. This bis-glutathionylated intermediate is subsequently processed by the gamma-glutamyl cyclotransferase gliK to remove both gamma-glutamyl moieties. Subsequent processing via gliI yields a biosynthetic intermediate, which is N-methylated via the N-methyltransferase gliN, before the gliotoxin oxidoreductase gliT-mediated disulfide bridge closure. GliN-mediated amide methylation confers stability to ETP, damping the spontaneous formation of tri- and tetrasulfides. Intracellular dithiol gliotoxin oxidized by gliT is subsequently effluxed by gliA. Gliotoxin contributes to pathogenesis during invasive aspergillosis. In macrophages and neutrophils, gliotoxin showed inhibition of various different cell functions including cytokine production, antigen presentation, phagocytosis, and production of reactive oxygen species. The protein is O-methyltransferase gliM of Aspergillus fumigatus (strain ATCC MYA-4609 / CBS 101355 / FGSC A1100 / Af293) (Neosartorya fumigata).